The sequence spans 1551 residues: Serine/threonine-protein kinase MRCK gamma (1551 aa).

The Protein kinase domain occupies 71-337 (FEILKVIGRG…LDDFRNHPFF (267 aa)). Residues 77–85 (IGRGAFGEV) and lysine 100 each bind ATP. The Proton acceptor role is filled by aspartate 195. Serine 216 and serine 228 each carry phosphoserine; by autocatalysis. Threonine 234 carries the post-translational modification Phosphothreonine; by autocatalysis. The AGC-kinase C-terminal domain maps to 338 to 408 (EGVDWERLAS…TSGSHSPESS (71 aa)). Coiled coils occupy residues 406 to 678 (ESSS…SNWE) and 730 to 802 (KARR…RARG). Disordered stretches follow at residues 467 to 486 (KASLSQTDGPPAGSPGQDSD), 655 to 675 (ELAQEQESKQRLEGERRETES), 801 to 849 (RGPV…PEGR), and 863 to 886 (TANTASTEGLPAKPGSHTLRPRSF). Positions 655–674 (ELAQEQESKQRLEGERRETE) are enriched in basic and acidic residues. A compositionally biased stretch (basic and acidic residues) spans 835–849 (ATRHGGEPDLRPEGR). The Phorbol-ester/DAG-type zinc finger occupies 878–927 (SHTLRPRSFPSPTKCLRCTSLMLGLGRQGLGCDACGYFCHTTCAPQAPPC). The region spanning 947 to 1066 (GTAYEGFLSV…WLQVLGELQR (120 aa)) is the PH domain. One can recognise a CNH domain in the interval 1092–1366 (LPHTLCAAIL…RPLNPEGSLF (275 aa)). A CRIB domain is found at 1437-1450 (ISPPTNFNHLVHVG). Positions 1442–1551 (NFNHLVHVGP…PLSPELESSP (110 aa)) are disordered. Positions 1457-1470 (GARDKSPAPEEKGR) are enriched in basic and acidic residues. Serine 1482 bears the Phosphoserine mark. A compositionally biased stretch (polar residues) spans 1511 to 1533 (TSLSSESVSCPQGSLSPATSLMQ). Low complexity predominate over residues 1540–1551 (SLPLSPELESSP).

It belongs to the protein kinase superfamily. AGC Ser/Thr protein kinase family. DMPK subfamily. Homodimer and homotetramer via the coiled coil regions. Interacts tightly with GTP-bound but not GDP-bound CDC42. The cofactor is Mg(2+). In terms of tissue distribution, expressed in heart and skeletal muscle.

The protein localises to the cytoplasm. The catalysed reaction is L-seryl-[protein] + ATP = O-phospho-L-seryl-[protein] + ADP + H(+). It carries out the reaction L-threonyl-[protein] + ATP = O-phospho-L-threonyl-[protein] + ADP + H(+). Its activity is regulated as follows. Maintained in an inactive, closed conformation by an interaction between the kinase domain and the negative autoregulatory C-terminal coiled-coil region. Agonist binding to the phorbol ester binding site disrupts this, releasing the kinase domain to allow N-terminus-mediated dimerization and kinase activation by transautophosphorylation. May act as a downstream effector of CDC42 in cytoskeletal reorganization. Contributes to the actomyosin contractility required for cell invasion, through the regulation of MYPT1 and thus MLC2 phosphorylation. The chain is Serine/threonine-protein kinase MRCK gamma from Homo sapiens (Human).